The following is a 322-amino-acid chain: Quinolinate synthase (322 aa).

Positions 38 and 55 each coordinate iminosuccinate. Position 100 (C100) interacts with [4Fe-4S] cluster. Residues 126–128 (YIN) and S143 each bind iminosuccinate. C186 provides a ligand contact to [4Fe-4S] cluster. Iminosuccinate is bound by residues 212 to 214 (HPE) and T229. Residue C279 participates in [4Fe-4S] cluster binding.

The protein belongs to the quinolinate synthase family. Type 2 subfamily. The cofactor is [4Fe-4S] cluster.

It is found in the cytoplasm. It carries out the reaction iminosuccinate + dihydroxyacetone phosphate = quinolinate + phosphate + 2 H2O + H(+). It participates in cofactor biosynthesis; NAD(+) biosynthesis; quinolinate from iminoaspartate: step 1/1. Functionally, catalyzes the condensation of iminoaspartate with dihydroxyacetone phosphate to form quinolinate. In Aquifex aeolicus (strain VF5), this protein is Quinolinate synthase.